Here is a 204-residue protein sequence, read N- to C-terminus: Molybdenum cofactor guanylyltransferase (204 aa).

GTP contacts are provided by residues 10–12 (LAG), lysine 23, asparagine 51, aspartate 69, and aspartate 99. Residue aspartate 99 coordinates Mg(2+).

Belongs to the MobA family. As to quaternary structure, monomer. Requires Mg(2+) as cofactor.

The protein localises to the cytoplasm. The enzyme catalyses Mo-molybdopterin + GTP + H(+) = Mo-molybdopterin guanine dinucleotide + diphosphate. Its function is as follows. Transfers a GMP moiety from GTP to Mo-molybdopterin (Mo-MPT) cofactor (Moco or molybdenum cofactor) to form Mo-molybdopterin guanine dinucleotide (Mo-MGD) cofactor. The polypeptide is Molybdenum cofactor guanylyltransferase (Shewanella piezotolerans (strain WP3 / JCM 13877)).